Reading from the N-terminus, the 598-residue chain is Aspartate--tRNA(Asp/Asn) ligase (598 aa).

Glutamate 182 is an L-aspartate binding site. Residues 206-209 (QIFK) are aspartate. Arginine 228 is an L-aspartate binding site. ATP contacts are provided by residues 228-230 (RDE) and glutamine 237. Histidine 456 serves as a coordination point for L-aspartate. ATP is bound at residue glutamate 490. Arginine 497 is a binding site for L-aspartate. 542-545 (GLDR) contacts ATP.

The protein belongs to the class-II aminoacyl-tRNA synthetase family. Type 1 subfamily. As to quaternary structure, homodimer.

The protein localises to the cytoplasm. The enzyme catalyses tRNA(Asx) + L-aspartate + ATP = L-aspartyl-tRNA(Asx) + AMP + diphosphate. Aspartyl-tRNA synthetase with relaxed tRNA specificity since it is able to aspartylate not only its cognate tRNA(Asp) but also tRNA(Asn). Reaction proceeds in two steps: L-aspartate is first activated by ATP to form Asp-AMP and then transferred to the acceptor end of tRNA(Asp/Asn). The protein is Aspartate--tRNA(Asp/Asn) ligase of Lachnoclostridium phytofermentans (strain ATCC 700394 / DSM 18823 / ISDg) (Clostridium phytofermentans).